Here is a 277-residue protein sequence, read N- to C-terminus: Ribonuclease HII (277 aa).

The region spanning 20 to 250 (KLIIGLDEAG…SKKLLKKIED (231 aa)) is the RNase H type-2 domain. A divalent metal cation contacts are provided by Asp-26, Glu-27, and Asp-141.

The protein belongs to the RNase HII family. Mn(2+) serves as cofactor. Requires Mg(2+) as cofactor.

The protein resides in the cytoplasm. It catalyses the reaction Endonucleolytic cleavage to 5'-phosphomonoester.. Functionally, endonuclease that specifically degrades the RNA of RNA-DNA hybrids. In Methanococcus aeolicus (strain ATCC BAA-1280 / DSM 17508 / OCM 812 / Nankai-3), this protein is Ribonuclease HII.